The chain runs to 305 residues: 17-beta-hydroxysteroid dehydrogenase type 3 (305 aa).

An NADP(+)-binding site is contributed by 44-73 (GQWAVITGAGDGIGKAYSFELARHGLNVVL). S181 is a binding site for substrate. Y194 functions as the Proton acceptor in the catalytic mechanism.

This sequence belongs to the short-chain dehydrogenases/reductases (SDR) family. 17-beta-HSD 3 subfamily. In terms of tissue distribution, expressed in the testes.

It is found in the endoplasmic reticulum. The enzyme catalyses a 17beta-hydroxy steroid + NADP(+) = a 17-oxo steroid + NADPH + H(+). It carries out the reaction testosterone + NADP(+) = androst-4-ene-3,17-dione + NADPH + H(+). It catalyses the reaction 17beta-estradiol + NADP(+) = estrone + NADPH + H(+). The catalysed reaction is 3beta-hydroxyandrost-5-en-17-one + NADPH + H(+) = androst-5-en-3beta,17beta-diol + NADP(+). The enzyme catalyses 17beta-hydroxy-5alpha-androstan-3-one + NADP(+) = 5alpha-androstan-3,17-dione + NADPH + H(+). It carries out the reaction androsterone + NADPH + H(+) = 5alpha-androstane-3alpha,17beta-diol + NADP(+). It catalyses the reaction 3beta-hydroxy-5alpha-androstan-17-one + NADPH + H(+) = 5alpha-androstane-3beta,17beta-diol + NADP(+). The catalysed reaction is androst-4-ene-3,11,17-trione + NADPH + H(+) = 17beta-hydroxyandrost-4-ene-3,11-dione + NADP(+). The enzyme catalyses 11beta-hydroxyandrost-4-ene-3,17-dione + NADPH + H(+) = 11beta,17beta-dihydroxyandrost-4-ene-3-one + NADP(+). The protein operates within hormone biosynthesis; testosterone biosynthesis. Its pathway is steroid metabolism. Functionally, catalyzes the conversion of 17-oxosteroids to 17beta-hydroxysteroids. Favors the reduction of androstenedione to testosterone. Testosterone is the key androgen driving male development and function. Uses NADPH while the two other EDH17B enzymes use NADH. Androgens such as epiandrosterone, dehydroepiandrosterone, androsterone and androstanedione are accepted as substrates and reduced at C-17. Can reduce 11-ketoandrostenedione as well as 11beta-hydroxyandrostenedione at C-17 to the respective testosterone forms. Plays a role in the rate-limiting-step for the maximum level of testosterone production by the testis but does not affect basal testosterone production. The polypeptide is 17-beta-hydroxysteroid dehydrogenase type 3 (Mus musculus (Mouse)).